Reading from the N-terminus, the 95-residue chain is MSIDESTAARVAKLARIKVEPAALPALAGEFNTILGFIEQLNEVDIDGVEPMTSVTPQVLKRRADVVADGDQQARVLSNAPDAREGFFAVPKVVE.

This sequence belongs to the GatC family. In terms of assembly, heterotrimer of A, B and C subunits.

The catalysed reaction is L-glutamyl-tRNA(Gln) + L-glutamine + ATP + H2O = L-glutaminyl-tRNA(Gln) + L-glutamate + ADP + phosphate + H(+). The enzyme catalyses L-aspartyl-tRNA(Asn) + L-glutamine + ATP + H2O = L-asparaginyl-tRNA(Asn) + L-glutamate + ADP + phosphate + 2 H(+). Functionally, allows the formation of correctly charged Asn-tRNA(Asn) or Gln-tRNA(Gln) through the transamidation of misacylated Asp-tRNA(Asn) or Glu-tRNA(Gln) in organisms which lack either or both of asparaginyl-tRNA or glutaminyl-tRNA synthetases. The reaction takes place in the presence of glutamine and ATP through an activated phospho-Asp-tRNA(Asn) or phospho-Glu-tRNA(Gln). This chain is Aspartyl/glutamyl-tRNA(Asn/Gln) amidotransferase subunit C, found in Roseobacter denitrificans (strain ATCC 33942 / OCh 114) (Erythrobacter sp. (strain OCh 114)).